The sequence spans 227 residues: Cytidylate kinase (227 aa).

G12–T20 contacts ATP.

The protein belongs to the cytidylate kinase family. Type 1 subfamily.

The protein localises to the cytoplasm. It carries out the reaction CMP + ATP = CDP + ADP. It catalyses the reaction dCMP + ATP = dCDP + ADP. The sequence is that of Cytidylate kinase from Photorhabdus laumondii subsp. laumondii (strain DSM 15139 / CIP 105565 / TT01) (Photorhabdus luminescens subsp. laumondii).